The primary structure comprises 328 residues: DNA-directed RNA polymerase subunit alpha (328 aa).

Positions 1-231 (MIYQMQMPER…EHVSLFANFS (231 aa)) are alpha N-terminal domain (alpha-NTD). Positions 252–328 (MRKLLQTRIE…MDITKYQMKS (77 aa)) are alpha C-terminal domain (alpha-CTD).

The protein belongs to the RNA polymerase alpha chain family. Homodimer. The RNAP catalytic core consists of 2 alpha, 1 beta, 1 beta' and 1 omega subunit. When a sigma factor is associated with the core the holoenzyme is formed, which can initiate transcription.

It catalyses the reaction RNA(n) + a ribonucleoside 5'-triphosphate = RNA(n+1) + diphosphate. Its function is as follows. DNA-dependent RNA polymerase catalyzes the transcription of DNA into RNA using the four ribonucleoside triphosphates as substrates. This Prosthecochloris aestuarii (strain DSM 271 / SK 413) protein is DNA-directed RNA polymerase subunit alpha.